Here is a 364-residue protein sequence, read N- to C-terminus: Fructose-bisphosphate aldolase B (364 aa).

N-acetylalanine is present on Ala2. An N6-succinyllysine modification is found at Lys13. At Ser36 the chain carries Phosphoserine. Thr39 is modified (phosphothreonine). Position 43 (Arg43) interacts with beta-D-fructose 1,6-bisphosphate. Thr119 carries the post-translational modification Phosphothreonine. Lys121 is modified (N6-succinyllysine). Ser132 is subject to Phosphoserine. Glu188 (proton acceptor) is an active-site residue. The Schiff-base intermediate with dihydroxyacetone-P role is filled by Lys230. A phosphoserine mark is found at Ser272, Ser276, Ser299, and Ser301. Residue 272–274 coordinates beta-D-fructose 1,6-bisphosphate; that stretch reads SGG. Arg304 is a beta-D-fructose 1,6-bisphosphate binding site. Ser309 is modified (phosphoserine). Lys317 is subject to N6-succinyllysine.

Belongs to the class I fructose-bisphosphate aldolase family. As to quaternary structure, homotetramer. Interacts with BBS1, BBS2, BBS4 and BBS7. Forms a ternary complex with G6PD and TP53; this interaction is direct.

The protein resides in the cytoplasm. The protein localises to the cytosol. It localises to the cytoskeleton. Its subcellular location is the microtubule organizing center. It is found in the centrosome. The protein resides in the centriolar satellite. The enzyme catalyses beta-D-fructose 1,6-bisphosphate = D-glyceraldehyde 3-phosphate + dihydroxyacetone phosphate. It carries out the reaction beta-D-fructose 1-phosphate = D-glyceraldehyde + dihydroxyacetone phosphate. It functions in the pathway carbohydrate degradation; glycolysis; D-glyceraldehyde 3-phosphate and glycerone phosphate from D-glucose: step 4/4. The protein operates within carbohydrate biosynthesis; gluconeogenesis. It participates in carbohydrate metabolism; fructose metabolism. Its function is as follows. Catalyzes the aldol cleavage of fructose 1,6-biphosphate to form two triosephosphates dihydroxyacetone phosphate and D-glyceraldehyde 3-phosphate in glycolysis as well as the reverse stereospecific aldol addition reaction in gluconeogenesis. In fructolysis, metabolizes fructose 1-phosphate derived from the phosphorylation of dietary fructose by fructokinase into dihydroxyacetone phosphate and D-glyceraldehyde. Acts as an adapter independently of its enzymatic activity, exerts a tumor suppressor role by stabilizing the ternary complex with G6PD and TP53 to inhibit G6PD activity and keep oxidative pentose phosphate metabolism in check. The polypeptide is Fructose-bisphosphate aldolase B (ALDOB) (Bos taurus (Bovine)).